The sequence spans 580 residues: Thymidine kinase (580 aa).

Disordered stretches follow at residues 1–60 (MAEG…KSVK) and 133–157 (VCGR…ASMG). Residues 137–149 (PPLPPPNHPPPAT) are compositionally biased toward pro residues. Residue 260-267 (GVMGVGKS) coordinates ATP. Residue Glu287 is the Proton acceptor of the active site. A substrate-binding site is contributed by Gln325. Arg415 lines the ATP pocket. Arg421 provides a ligand contact to substrate.

This sequence belongs to the herpesviridae thymidine kinase family. Homodimer.

It carries out the reaction thymidine + ATP = dTMP + ADP + H(+). Its function is as follows. Catalyzes the transfer of the gamma-phospho group of ATP to thymidine to generate dTMP in the salvage pathway of pyrimidine synthesis. The dTMP serves as a substrate for DNA polymerase during viral DNA replication. Allows the virus to be reactivated and to grow in non-proliferative cells lacking a high concentration of phosphorylated nucleic acid precursors. This is Thymidine kinase from Human herpesvirus 8 type P (isolate GK18) (HHV-8).